The sequence spans 1300 residues: Insulin receptor-related protein (1300 aa).

Positions 1–26 are cleaved as a signal peptide; that stretch reads MAVPALWPWGVHLLMSLLSLGSGLDT. N-linked (GlcNAc...) asparagine glycosylation is found at Asn47 and Asn100. Disulfide bonds link Cys214/Cys222, Cys216/Cys228, Cys229/Cys237, Cys233/Cys246, Cys249/Cys258, Cys262/Cys274, Cys280/Cys300, Cys304/Cys317, and Cys320/Cys324. An N-linked (GlcNAc...) asparagine glycan is attached at Asn311. Asn411, Asn492, Asn528, Asn616, Asn634, Asn756, Asn885, and Asn898 each carry an N-linked (GlcNAc...) asparagine glycan. 2 Fibronectin type-III domains span residues 483-603 and 607-707; these read QTRT…TLPA and VPQD…AQEV. Cys657 and Cys864 are disulfide-bonded. Residues 747–921 lie on the Extracellular side of the membrane; the sequence is EAGLLRLGKN…LEEEDTGGMR (175 aa). In terms of domain architecture, Fibronectin type-III 3 spans 818-913; sequence IPGKVAWKAA…GVTFYITDLE (96 aa). A helical transmembrane segment spans residues 922–943; the sequence is IFLTVTPVGFMLLVTLAALGFF. Topologically, residues 944–1300 are cytoplasmic; sequence YSRKRNSTLY…YSAPNGGPGH (357 aa). Residues 979 to 1254 form the Protein kinase domain; that stretch reads IAIIRELGQG…RIQDELRPSF (276 aa). ATP contacts are provided by residues 985–993 and Lys1013; that span reads LGQGSFGMV. Asp1115 (proton acceptor) is an active-site residue. 2 positions are modified to phosphotyrosine; by autocatalysis: Tyr1145 and Tyr1146. Residues 1273 to 1300 form a disordered region; it reads LPTEAEPDSPPTLNGASDYSAPNGGPGH.

The protein belongs to the protein kinase superfamily. Tyr protein kinase family. Insulin receptor subfamily. In terms of assembly, probable tetramer of 2 alpha and 2 beta chains linked by disulfide bonds. The alpha chains contribute to the formation of the ligand-binding domain, while the beta chains carry the kinase domain. Post-translationally, autophosphorylated on tyrosine residues between pH 7.9 and pH 10.5. In terms of tissue distribution, highly expressed in the islets as well as in pancreatic beta-cells.

Its subcellular location is the membrane. The catalysed reaction is L-tyrosyl-[protein] + ATP = O-phospho-L-tyrosyl-[protein] + ADP + H(+). Functionally, receptor with tyrosine-protein kinase activity. Functions as a pH sensing receptor which is activated by increased extracellular pH. Activates an intracellular signaling pathway that involves IRS1 and AKT1/PKB. This is Insulin receptor-related protein (Insrr) from Mus musculus (Mouse).